Here is a 572-residue protein sequence, read N- to C-terminus: Squalene synthase (572 aa).

Transmembrane regions (helical) follow at residues 316–336 (SVFN…ELMF) and 492–512 (FFLI…LITW).

Belongs to the phytoene/squalene synthase family. As to quaternary structure, monomer. Mg(2+) serves as cofactor.

The protein resides in the endoplasmic reticulum membrane. The catalysed reaction is 2 (2E,6E)-farnesyl diphosphate + NADPH + H(+) = squalene + 2 diphosphate + NADP(+). The enzyme catalyses 2 (2E,6E)-farnesyl diphosphate + NADH + H(+) = squalene + 2 diphosphate + NAD(+). It participates in terpene metabolism; lanosterol biosynthesis; lanosterol from farnesyl diphosphate: step 1/3. Functionally, catalyzes the condensation of 2 two farnesyl pyrophosphate moieties to form squalene. It is the first committed enzyme of the sterol biosynthesis pathway. Required for the biosynthesis of ergosterol. The sequence is that of Squalene synthase (ERG9) from Mycosarcoma maydis (Corn smut fungus).